The chain runs to 305 residues: Transmembrane protein 74 (305 aa).

S11 bears the Phosphoserine mark. Residues 122–132 (QRSQRSPSAKG) are compositionally biased toward polar residues. The interval 122 to 143 (QRSQRSPSAKGSNHPVDLGWGN) is disordered. Helical transmembrane passes span 178–198 (FISA…SYIV) and 232–252 (VIAG…LLMM).

Belongs to the TMEM74 family.

The protein localises to the lysosome membrane. It localises to the cytoplasmic vesicle. It is found in the autophagosome membrane. In terms of biological role, plays an essential role in autophagy. TMEM74-induced autophagy may involve PI3K signal transduction. This chain is Transmembrane protein 74 (Tmem74), found in Mus musculus (Mouse).